A 140-amino-acid chain; its full sequence is Nucleoside diphosphate kinase (140 aa).

ATP contacts are provided by Lys11, Phe59, Arg87, Thr93, Arg104, and Asn114. His117 functions as the Pros-phosphohistidine intermediate in the catalytic mechanism.

This sequence belongs to the NDK family. In terms of assembly, homotetramer. Mg(2+) serves as cofactor.

Its subcellular location is the cytoplasm. The enzyme catalyses a 2'-deoxyribonucleoside 5'-diphosphate + ATP = a 2'-deoxyribonucleoside 5'-triphosphate + ADP. It carries out the reaction a ribonucleoside 5'-diphosphate + ATP = a ribonucleoside 5'-triphosphate + ADP. Its function is as follows. Major role in the synthesis of nucleoside triphosphates other than ATP. The ATP gamma phosphate is transferred to the NDP beta phosphate via a ping-pong mechanism, using a phosphorylated active-site intermediate. The chain is Nucleoside diphosphate kinase from Sinorhizobium medicae (strain WSM419) (Ensifer medicae).